We begin with the raw amino-acid sequence, 92 residues long: Protein RnfH (92 aa).

It belongs to the UPF0125 (RnfH) family.

The chain is Protein RnfH from Neisseria gonorrhoeae (strain NCCP11945).